The following is a 93-amino-acid chain: PqqA binding protein (93 aa).

The protein belongs to the PqqD family. In terms of assembly, monomer. Interacts with PqqE.

It participates in cofactor biosynthesis; pyrroloquinoline quinone biosynthesis. Functionally, functions as a PqqA binding protein and presents PqqA to PqqE, in the pyrroloquinoline quinone (PQQ) biosynthetic pathway. In Methylococcus capsulatus (strain ATCC 33009 / NCIMB 11132 / Bath), this protein is PqqA binding protein.